The following is a 461-amino-acid chain: Bifunctional protein GlmU (461 aa).

A pyrophosphorylase region spans residues 1-235 (MTDTRKQRAA…EDDLIGCDSK (235 aa)). Residues 13 to 16 (LAAG), Lys-27, Gln-80, 85 to 86 (GT), 108 to 110 (YGD), Gly-146, Glu-161, and Asn-176 contribute to the UDP-N-acetyl-alpha-D-glucosamine site. Asp-110 is a binding site for Mg(2+). The segment at 236–256 (ADLAEAEAIFQQKRRRALMEA) is linker. The segment at 257–461 (GVTMVAPETV…ARTTDQNKKG (205 aa)) is N-acetyltransferase. Residues Arg-322 and Lys-340 each contribute to the UDP-N-acetyl-alpha-D-glucosamine site. His-352 serves as the catalytic Proton acceptor. The UDP-N-acetyl-alpha-D-glucosamine site is built by Tyr-355 and Asn-366. Residues Ala-369, 375–376 (NY), Ser-394, Ser-412, and Arg-429 each bind acetyl-CoA.

This sequence in the N-terminal section; belongs to the N-acetylglucosamine-1-phosphate uridyltransferase family. It in the C-terminal section; belongs to the transferase hexapeptide repeat family. In terms of assembly, homotrimer. The cofactor is Mg(2+).

Its subcellular location is the cytoplasm. It carries out the reaction alpha-D-glucosamine 1-phosphate + acetyl-CoA = N-acetyl-alpha-D-glucosamine 1-phosphate + CoA + H(+). It catalyses the reaction N-acetyl-alpha-D-glucosamine 1-phosphate + UTP + H(+) = UDP-N-acetyl-alpha-D-glucosamine + diphosphate. It participates in nucleotide-sugar biosynthesis; UDP-N-acetyl-alpha-D-glucosamine biosynthesis; N-acetyl-alpha-D-glucosamine 1-phosphate from alpha-D-glucosamine 6-phosphate (route II): step 2/2. It functions in the pathway nucleotide-sugar biosynthesis; UDP-N-acetyl-alpha-D-glucosamine biosynthesis; UDP-N-acetyl-alpha-D-glucosamine from N-acetyl-alpha-D-glucosamine 1-phosphate: step 1/1. The protein operates within bacterial outer membrane biogenesis; LPS lipid A biosynthesis. In terms of biological role, catalyzes the last two sequential reactions in the de novo biosynthetic pathway for UDP-N-acetylglucosamine (UDP-GlcNAc). The C-terminal domain catalyzes the transfer of acetyl group from acetyl coenzyme A to glucosamine-1-phosphate (GlcN-1-P) to produce N-acetylglucosamine-1-phosphate (GlcNAc-1-P), which is converted into UDP-GlcNAc by the transfer of uridine 5-monophosphate (from uridine 5-triphosphate), a reaction catalyzed by the N-terminal domain. This Hyphomonas neptunium (strain ATCC 15444) protein is Bifunctional protein GlmU.